Here is a 187-residue protein sequence, read N- to C-terminus: Adenylate kinase (187 aa).

Position 12 to 17 (12 to 17) interacts with ATP; that stretch reads GAGKGT. The interval 32 to 61 is NMP; the sequence is STGDIFRANLAENTELGQKARQFMDAGDLV. AMP-binding positions include Thr33, Arg38, 59 to 61, 87 to 90, and Gln94; these read DLV and GYPR. The interval 128-134 is LID; that stretch reads GRGRADD. Arg129 lines the ATP pocket. AMP-binding residues include Arg131 and Arg142. Arg170 contributes to the ATP binding site.

The protein belongs to the adenylate kinase family. As to quaternary structure, monomer.

The protein resides in the cytoplasm. It catalyses the reaction AMP + ATP = 2 ADP. Its pathway is purine metabolism; AMP biosynthesis via salvage pathway; AMP from ADP: step 1/1. Functionally, catalyzes the reversible transfer of the terminal phosphate group between ATP and AMP. Plays an important role in cellular energy homeostasis and in adenine nucleotide metabolism. This Leuconostoc mesenteroides subsp. mesenteroides (strain ATCC 8293 / DSM 20343 / BCRC 11652 / CCM 1803 / JCM 6124 / NCDO 523 / NBRC 100496 / NCIMB 8023 / NCTC 12954 / NRRL B-1118 / 37Y) protein is Adenylate kinase.